We begin with the raw amino-acid sequence, 223 residues long: Ribonuclease 3 (223 aa).

Residues 4-127 form the RNase III domain; sequence LNRLEEHLGY…LMGAIYLESG (124 aa). A Mg(2+)-binding site is contributed by Glu-40. The active site involves Asp-44. Positions 113 and 116 each coordinate Mg(2+). The active site involves Glu-116. The 70-residue stretch at 154–223 folds into the DRBM domain; it reads DYKTTLQEIT…AWKVLQGMNI (70 aa).

The protein belongs to the ribonuclease III family. Homodimer. The cofactor is Mg(2+).

The protein localises to the cytoplasm. The catalysed reaction is Endonucleolytic cleavage to 5'-phosphomonoester.. Functionally, digests double-stranded RNA. Involved in the processing of primary rRNA transcript to yield the immediate precursors to the large and small rRNAs (23S and 16S). Processes some mRNAs, and tRNAs when they are encoded in the rRNA operon. Processes pre-crRNA and tracrRNA of type II CRISPR loci if present in the organism. In Campylobacter fetus subsp. fetus (strain 82-40), this protein is Ribonuclease 3.